A 421-amino-acid chain; its full sequence is MIIMALNCGSSSVKYQLFDWDKKVVVAKGMVERVIVGDSYIVHEVPGRDNYKLEQDCPDHRAAIDLVIRTVTDRECGVLQSVAEISAVGHRVVHGGEKFTCSVRIDDDVLNAVKDVQHLAPLHNPPNIEGIEAARALMPAIPHVAIFDTAFHQTMPEHAFLYPVPYDWYENHGVRRYGFHGTSHLYVSKRAAMLLGKPAEQCNIITMHIGNGVSHCAIKGGVSVDTTMGLTPLEGAVMGTRSGDIDPAIPAFMMQKENLSAKEIDSVLNKKSGILGITGRYTDRRDVIEHAAKGDHRCQLALDIEAYRLKKYIGAYMAAIGKLDAVVFTAGVGEMGAAIREKAIEGLEHIGIHLDRERNAGAMTRKRESLITTDDSPVKVYVIPTDEELVFTEDVVAILNGTYTDHMQFEYSFAKPDFVRT.

Residue Asn7 participates in Mg(2+) binding. Residue Lys14 participates in ATP binding. A substrate-binding site is contributed by Arg91. Asp148 acts as the Proton donor/acceptor in catalysis. ATP is bound by residues 208 to 212 and 283 to 285; these read HIGNG and DRR. Residue Glu387 participates in Mg(2+) binding.

Belongs to the acetokinase family. As to quaternary structure, homodimer. It depends on Mg(2+) as a cofactor. Mn(2+) serves as cofactor.

The protein resides in the cytoplasm. It carries out the reaction acetate + ATP = acetyl phosphate + ADP. The protein operates within metabolic intermediate biosynthesis; acetyl-CoA biosynthesis; acetyl-CoA from acetate: step 1/2. Catalyzes the formation of acetyl phosphate from acetate and ATP. Can also catalyze the reverse reaction. In Trichlorobacter lovleyi (strain ATCC BAA-1151 / DSM 17278 / SZ) (Geobacter lovleyi), this protein is Acetate kinase.